Consider the following 354-residue polypeptide: GTPase Obg (354 aa).

The region spanning 1–159 (MKFVDEVKIH…RDLVLELKLL (159 aa)) is the Obg domain. In terms of domain architecture, OBG-type G spans 160–333 (ADVGIVGYPN…LLDAVGRALF (174 aa)). Residues 166 to 173 (GYPNAGKS), 191 to 195 (FTTLT), 212 to 215 (DIPG), 283 to 286 (TKID), and 314 to 316 (SAV) each bind GTP. 2 residues coordinate Mg(2+): serine 173 and threonine 193.

Belongs to the TRAFAC class OBG-HflX-like GTPase superfamily. OBG GTPase family. In terms of assembly, monomer. It depends on Mg(2+) as a cofactor.

It localises to the cytoplasm. In terms of biological role, an essential GTPase which binds GTP, GDP and possibly (p)ppGpp with moderate affinity, with high nucleotide exchange rates and a fairly low GTP hydrolysis rate. Plays a role in control of the cell cycle, stress response, ribosome biogenesis and in those bacteria that undergo differentiation, in morphogenesis control. This is GTPase Obg from Anaeromyxobacter sp. (strain K).